The chain runs to 205 residues: MEELTKRQSQVLDFIKSYMEKNGFAPSIRDIMKHFNFKSPRAAHKHLIILEKKGYIERKNVSRGIKMMPKSGEIFATETLAPVSGKIAAGDAIEAIQTISDYIPIPTNFFPKNYEYFSLRVEGNSMIEAQIKSGDFVLIRKQDYAMDGDIVVALIDGNDATLKRYKRLNEDEVLLIPENKSMKEIKVKADHLKIQGKMVGLIRVL.

Positions 28-48 form a DNA-binding region, H-T-H motif; that stretch reads IRDIMKHFNFKSPRAAHKHLI. Catalysis depends on for autocatalytic cleavage activity residues serine 125 and lysine 163.

The protein belongs to the peptidase S24 family. In terms of assembly, homodimer.

The catalysed reaction is Hydrolysis of Ala-|-Gly bond in repressor LexA.. Represses a number of genes involved in the response to DNA damage (SOS response), including recA and lexA. In the presence of single-stranded DNA, RecA interacts with LexA causing an autocatalytic cleavage which disrupts the DNA-binding part of LexA, leading to derepression of the SOS regulon and eventually DNA repair. The chain is LexA repressor from Petrotoga mobilis (strain DSM 10674 / SJ95).